Here is a 397-residue protein sequence, read N- to C-terminus: Ethanolaminephosphotransferase 1 (397 aa).

N-acetylalanine is present on alanine 2. The next 10 helical transmembrane spans lie at 47–69 (WLAPNLITFSGFLLVVFNFLLMA), 84–103 (HVPDWVWIVVGILNFVAYTL), 123–145 (LFDHGLDNWSYVYFVVTVYSIFG), 150–172 (GVSVFVLYLLLWVVLFSFILSHW), 179–201 (ILFLPWGYDISQVTISFVYIVTA), 221–243 (LFTAMIIGCALCVTLPMSLLNFF), 256–278 (VYEAMVPLFSPCLLFILSTAWIL), 291–310 (VFYFMVGTAFANSTCQLIVC), 317–339 (CPTLNWLLVPLFLVVLVVNLGVA), and 344–366 (SILLYTLTTAFTLAHIHYGVRVV). Position 387 (selenocysteine 387) is a non-standard amino acid, selenocysteine.

The protein belongs to the CDP-alcohol phosphatidyltransferase class-I family. Mg(2+) serves as cofactor. Mn(2+) is required as a cofactor.

The protein resides in the endoplasmic reticulum membrane. It carries out the reaction CDP-ethanolamine + a 1,2-diacyl-sn-glycerol = a 1,2-diacyl-sn-glycero-3-phosphoethanolamine + CMP + H(+). The catalysed reaction is 1-O-alkyl-2-acyl-sn-glycerol + CDP-ethanolamine = a 1-O-alkyl-2-acyl-sn-glycero-3-phosphoethanolamine + CMP + H(+). Its pathway is phospholipid metabolism; phosphatidylethanolamine biosynthesis; phosphatidylethanolamine from ethanolamine: step 3/3. In terms of biological role, ethanolaminephosphotransferase that catalyzes the transfer of phosphoethanolamine (PE) from CDP-ethanolamine to lipid acceptors, the final step in the synthesis of PE via the 'Kennedy' pathway. PE is the second most abundant phospholipid of membranes in mammals and is involved in various membrane-related cellular processes. The enzyme is critical for the synthesis of several PE species and also catalyzes the synthesis of plasmanyl-PE, a lipid required for proper myelination and neurodevelopment, from 1-alkyl-2-acylglycerol. This chain is Ethanolaminephosphotransferase 1, found in Pongo abelii (Sumatran orangutan).